Consider the following 189-residue polypeptide: UPF0149 protein VF_2102 (189 aa).

This sequence belongs to the UPF0149 family.

This Aliivibrio fischeri (strain ATCC 700601 / ES114) (Vibrio fischeri) protein is UPF0149 protein VF_2102.